Reading from the N-terminus, the 292-residue chain is ATP synthase gamma chain (292 aa).

The protein belongs to the ATPase gamma chain family. In terms of assembly, F-type ATPases have 2 components, CF(1) - the catalytic core - and CF(0) - the membrane proton channel. CF(1) has five subunits: alpha(3), beta(3), gamma(1), delta(1), epsilon(1). CF(0) has three main subunits: a, b and c.

It localises to the cell inner membrane. Its function is as follows. Produces ATP from ADP in the presence of a proton gradient across the membrane. The gamma chain is believed to be important in regulating ATPase activity and the flow of protons through the CF(0) complex. This Methylobacterium sp. (strain 4-46) protein is ATP synthase gamma chain.